The following is a 47-amino-acid chain: Delta-stichotoxin-Hcr1d (47 aa).

Cystine bridges form between Cys3-Cys43, Cys5-Cys33, and Cys26-Cys44.

It belongs to the sea anemone sodium channel inhibitory toxin family. Type II subfamily.

The protein resides in the secreted. Its subcellular location is the nematocyst. Functionally, binds to site 3 of voltage-gated sodium channels and inhibits the inactivation process. The protein is Delta-stichotoxin-Hcr1d of Radianthus crispa (Leathery sea anemone).